We begin with the raw amino-acid sequence, 253 residues long: Octanoyltransferase (253 aa).

In terms of domain architecture, BPL/LPL catalytic spans 47–236 (PETPDQVWLV…ALCEVLAARE (190 aa)). Substrate-binding positions include 87 to 94 (RGGQITYH), 159 to 161 (ALG), and 172 to 174 (GVS). Cys-190 serves as the catalytic Acyl-thioester intermediate.

The protein belongs to the LipB family.

It is found in the cytoplasm. It catalyses the reaction octanoyl-[ACP] + L-lysyl-[protein] = N(6)-octanoyl-L-lysyl-[protein] + holo-[ACP] + H(+). The protein operates within protein modification; protein lipoylation via endogenous pathway; protein N(6)-(lipoyl)lysine from octanoyl-[acyl-carrier-protein]: step 1/2. Its function is as follows. Catalyzes the transfer of endogenously produced octanoic acid from octanoyl-acyl-carrier-protein onto the lipoyl domains of lipoate-dependent enzymes. Lipoyl-ACP can also act as a substrate although octanoyl-ACP is likely to be the physiological substrate. This is Octanoyltransferase from Cupriavidus pinatubonensis (strain JMP 134 / LMG 1197) (Cupriavidus necator (strain JMP 134)).